A 66-amino-acid chain; its full sequence is Conotoxin Bu1.4 (66 aa).

The signal sequence occupies residues 1-23 (MGMRMRMMFTVFLLVVLANTVVS). A propeptide spanning residues 24–46 (FPSDRDSDGADAEASDEPVEFER) is cleaved from the precursor. The tract at residues 25-48 (PSDRDSDGADAEASDEPVEFERDE) is disordered. Residues 32 to 42 (GADAEASDEPV) are compositionally biased toward acidic residues. 2 cysteine pairs are disulfide-bonded: Cys51–Cys57 and Cys52–Cys62. The residue at position 63 (Thr63) is a Threonine amide.

The protein belongs to the conotoxin A superfamily. As to expression, expressed by the venom duct.

Its subcellular location is the secreted. This Conus bullatus (Bubble cone) protein is Conotoxin Bu1.4.